The chain runs to 136 residues: Holo-[acyl-carrier-protein] synthase (136 aa).

The Mg(2+) site is built by aspartate 8 and glutamate 57.

Belongs to the P-Pant transferase superfamily. AcpS family. The cofactor is Mg(2+).

The protein resides in the cytoplasm. The catalysed reaction is apo-[ACP] + CoA = holo-[ACP] + adenosine 3',5'-bisphosphate + H(+). Transfers the 4'-phosphopantetheine moiety from coenzyme A to a Ser of acyl-carrier-protein. This is Holo-[acyl-carrier-protein] synthase from Methylobacterium radiotolerans (strain ATCC 27329 / DSM 1819 / JCM 2831 / NBRC 15690 / NCIMB 10815 / 0-1).